The chain runs to 326 residues: Light-induced protein, chloroplastic (326 aa).

The transit peptide at 1–63 directs the protein to the chloroplast; it reads MASISSLNQI…TNPKPKFTAQ (63 aa).

This sequence belongs to the LIPC family. Associates with the major light-harvesting antenna complex polypeptides of the PSII oxygen-evolving complex. As to expression, expressed in leaves.

It localises to the plastid. Its subcellular location is the chloroplast thylakoid membrane. Functionally, required for normal plant growth. May be both photoprotective and play an ancillary role in photosynthesis. May structurally stabilize thylakoids during osmotic and oxidative stress. In Solanum tuberosum (Potato), this protein is Light-induced protein, chloroplastic.